The chain runs to 465 residues: MFIYDTKLKQKVPFEPLVHNKANIYVCGPTVYDDAHLGHARSAIAFDLLRRTLELSGYEVVLVRNFTDIDDKIINKAFKENKSIQELSSIYIESYTRDLNALNVKQPSLEPKASEYLDAMVRMIETLLEKNFAYRVSNGDIYLDTSKDKDYGSLSMHNSSVEFSRIGLVQEKRLEQDFVLWKSYKGDNDVGFDSPLGKGRPGWHIECSSMVFETLALANAPYQIDIHAGGTDLLFPHHENEACQTRCAFGVEIAKYWMHNGFVNINNEKMSKSLGNSFFIKDALKNYDGEILRNYLLGVHYRSVLNFNEEDLLMSKKRLDKIYRLKQRVLGTLGGINPNFKKEILECMQDDLNVSKALSVLESMLSSTNEKLDQNPKNKALKGEILANLKFIEELLGIGFKDPSAYFQLGVSESEKQEIENKIEERKRAKEQKDFLKADSIREELLQQKIALMDTPQGTIWEKLF.

Cysteine 27 contacts Zn(2+). The 'HIGH' region signature appears at 29 to 39 (PTVYDDAHLGH). 3 residues coordinate Zn(2+): cysteine 207, histidine 237, and glutamate 241. Positions 269–273 (KMSKS) match the 'KMSKS' region motif. Position 272 (lysine 272) interacts with ATP.

It belongs to the class-I aminoacyl-tRNA synthetase family. In terms of assembly, monomer. Zn(2+) serves as cofactor.

It is found in the cytoplasm. It carries out the reaction tRNA(Cys) + L-cysteine + ATP = L-cysteinyl-tRNA(Cys) + AMP + diphosphate. This Helicobacter pylori (strain J99 / ATCC 700824) (Campylobacter pylori J99) protein is Cysteine--tRNA ligase (cysS).